The following is a 396-amino-acid chain: Tryptophan synthase beta chain (396 aa).

K86 is subject to N6-(pyridoxal phosphate)lysine.

It belongs to the TrpB family. Tetramer of two alpha and two beta chains. It depends on pyridoxal 5'-phosphate as a cofactor.

The enzyme catalyses (1S,2R)-1-C-(indol-3-yl)glycerol 3-phosphate + L-serine = D-glyceraldehyde 3-phosphate + L-tryptophan + H2O. The protein operates within amino-acid biosynthesis; L-tryptophan biosynthesis; L-tryptophan from chorismate: step 5/5. Its function is as follows. The beta subunit is responsible for the synthesis of L-tryptophan from indole and L-serine. The chain is Tryptophan synthase beta chain from Francisella tularensis subsp. holarctica (strain FTNF002-00 / FTA).